We begin with the raw amino-acid sequence, 82 residues long: Delta-conotoxin SVIE (82 aa).

A signal peptide spans 1–22 (MKLTCVMIVAVLFLTTWTFVTA). Residues 23–51 (DDSRYGLKNLFPKARHEMKNPEASKLNKR) constitute a propeptide that is removed on maturation. Cystine bridges form between C54–C69, C61–C73, and C68–C77. P65 carries the post-translational modification 4-hydroxyproline.

This sequence belongs to the conotoxin O1 superfamily. Expressed by the venom duct.

It is found in the secreted. Delta-conotoxins bind to site 6 of voltage-gated sodium channels (Nav) and inhibit the inactivation process. Impairs rapid channel inactivation of Nav1.4/SCN4A (Kd=500 nM). Interacts with a conserved hydrophobic triad (YFV) in the domain-4 voltage sensor of sodium channels. In vivo, injection of both native or synthetic peptide induces twitching of back limbs, running in circles, and spastic paralysis. The chain is Delta-conotoxin SVIE (SO6) from Conus striatus (Striated cone).